A 113-amino-acid chain; its full sequence is Large ribosomal subunit protein P2B (113 aa).

The disordered stretch occupies residues 66–113; sequence PSGGGAIDMGAPAAVAGGGAAPAEEAKKEEKVEEKEESDEDMGFSLFD. Basic and acidic residues predominate over residues 89–99; it reads EEAKKEEKVEE.

The protein belongs to the eukaryotic ribosomal protein P1/P2 family. As to quaternary structure, P1 and P2 exist as dimers at the large ribosomal subunit. Phosphorylated.

Functionally, plays an important role in the elongation step of protein synthesis. The protein is Large ribosomal subunit protein P2B (RPP2B) of Zea mays (Maize).